The sequence spans 477 residues: Bifunctional protein HldE (477 aa).

The tract at residues 1 to 320 (MKDSLPAFEK…SLSDTHHSET (320 aa)) is ribokinase. ATP is bound at residue 195 to 198 (NLHE). D264 is an active-site residue. A cytidylyltransferase region spans residues 346–477 (MTNGCFDILH…KIIENIMANQ (132 aa)).

In the N-terminal section; belongs to the carbohydrate kinase PfkB family. This sequence in the C-terminal section; belongs to the cytidylyltransferase family. Homodimer.

The enzyme catalyses D-glycero-beta-D-manno-heptose 7-phosphate + ATP = D-glycero-beta-D-manno-heptose 1,7-bisphosphate + ADP + H(+). It catalyses the reaction D-glycero-beta-D-manno-heptose 1-phosphate + ATP + H(+) = ADP-D-glycero-beta-D-manno-heptose + diphosphate. It functions in the pathway nucleotide-sugar biosynthesis; ADP-L-glycero-beta-D-manno-heptose biosynthesis; ADP-L-glycero-beta-D-manno-heptose from D-glycero-beta-D-manno-heptose 7-phosphate: step 1/4. The protein operates within nucleotide-sugar biosynthesis; ADP-L-glycero-beta-D-manno-heptose biosynthesis; ADP-L-glycero-beta-D-manno-heptose from D-glycero-beta-D-manno-heptose 7-phosphate: step 3/4. In terms of biological role, catalyzes the phosphorylation of D-glycero-D-manno-heptose 7-phosphate at the C-1 position to selectively form D-glycero-beta-D-manno-heptose-1,7-bisphosphate. Functionally, catalyzes the ADP transfer from ATP to D-glycero-beta-D-manno-heptose 1-phosphate, yielding ADP-D-glycero-beta-D-manno-heptose. This is Bifunctional protein HldE from Shewanella piezotolerans (strain WP3 / JCM 13877).